The sequence spans 168 residues: Cytochrome c oxidase subunit 2 (168 aa).

Over M1–D3 the chain is Cytoplasmic. A helical membrane pass occupies residues E4 to A38. The Periplasmic portion of the chain corresponds to T39–E168. H114, C149, C153, and H157 together coordinate Cu cation.

Belongs to the cytochrome c oxidase subunit 2 family.

It localises to the cell membrane. It catalyses the reaction 4 Fe(II)-[cytochrome c] + O2 + 8 H(+)(in) = 4 Fe(III)-[cytochrome c] + 2 H2O + 4 H(+)(out). Functionally, subunits I and II form the functional core of the enzyme complex. Electrons originating in cytochrome c are transferred via heme a and Cu(A) to the binuclear center formed by heme a3 and Cu(B). The polypeptide is Cytochrome c oxidase subunit 2 (cbaB) (Thermus thermophilus (strain ATCC 27634 / DSM 579 / HB8)).